Reading from the N-terminus, the 727-residue chain is MTERSGRGGGTRGASALPSPDYYEQVAHLQQGLRNSEKKRLDLERKLYEYHQSDVCRAKLKYIKLKKYLKEICESEKNARIRNQEYLKQFERIQANITASLEKLQELKIEFETQIKKMQLLSKDSLGKKGELKDEDKEKVVMRAEINSGTAMSRGLYQPATIFMGRQMSAVSGIGDFTTERKSPQPTKNFSIPDPHSHQQTAQSSDVTGSRVVQTPGDTQCLNKSDKIDGKTSLQIGEKTPVTASALSEEEQTHCFEIGSNACQSKSNLSEGKKSAELHSPLWERLSPENRTTDLKCDSSRRSEGSEGEILTREHIEVEEERARPPVSPLSGSESCASENECPQEKPPARKASSDHLPCEDSQSQEPFRKKQEEQEEESLSSSSDLTVSVSEDDLILKSPELQTNLGDTMEQEDGTETLNVIHSEQERDAPSTGKPNCILQAPSTPDSPNESFTNLPAKELCNHSDILREGPDAYRTAVLHQLSQLCPRGGSDKEQVRFEQTPASGLLRTRSGQHIAALKGHDTFVQEEEVAKLSGVFLVSKLDQRTKATALLKKDLAEEHDNRLAVHSSKSSCSLPSTPSDESGIRNGKPTLWPKGVTTREQEDESREESTEESMAARMPITETKAYQRLKQSALQGSTHQAGDGFQEATAPTSQPPGLKTGSGTFKTKTTHKIASEASFSSSEGSPLSRHENEGKLTTNLKSKAFWSESDESNSEIEAALRPRTP.

Residues 1 to 20 are disordered; the sequence is MTERSGRGGGTRGASALPSP. A coiled-coil region spans residues 77-124; it reads KNARIRNQEYLKQFERIQANITASLEKLQELKIEFETQIKKMQLLSKD. Disordered regions lie at residues 176-226, 271-456, and 564-727; these read DFTT…NKSD, EGKK…FTNL, and RLAV…PRTP. Residues 198–223 show a composition bias toward polar residues; that stretch reads HQQTAQSSDVTGSRVVQTPGDTQCLN. Over residues 286-324 the composition is skewed to basic and acidic residues; sequence LSPENRTTDLKCDSSRRSEGSEGEILTREHIEVEEERAR. A Phosphoserine modification is found at serine 328. A compositionally biased stretch (basic and acidic residues) spans 343-359; it reads PQEKPPARKASSDHLPC. The segment covering 380 to 390 has biased composition (low complexity); the sequence is LSSSSDLTVSV. At threonine 387 the chain carries Phosphothreonine; by PLK1. A compositionally biased stretch (polar residues) spans 442-455; that stretch reads APSTPDSPNESFTN. Over residues 569 to 583 the composition is skewed to low complexity; it reads SSKSSCSLPSTPSDE. Residues 603–613 are compositionally biased toward acidic residues; that stretch reads QEDESREESTE. A compositionally biased stretch (polar residues) spans 631–642; that stretch reads LKQSALQGSTHQ. Composition is skewed to low complexity over residues 659 to 669 and 677 to 689; these read GLKTGSGTFKT and SEAS…GSPL. A phosphoserine mark is found at serine 711, serine 714, and serine 716.

Belongs to the kizuna family. Interacts with AKAP9, CEP72, ODF2, PCNT and TUBGCP2. In terms of processing, phosphorylation at Thr-387 by PLK1 is not needed for centrosomal localization or pericentriolar material expansion but is indispensable for spindle-pole stabilization.

It is found in the cytoplasm. It localises to the cytoskeleton. Its subcellular location is the microtubule organizing center. The protein localises to the centrosome. The protein resides in the cilium basal body. Functionally, centrosomal protein required for establishing a robust mitotic centrosome architecture that can endure the forces that converge on the centrosomes during spindle formation. Required for stabilizing the expanded pericentriolar material around the centriole. The chain is Centrosomal protein kizuna (KIZ) from Bos taurus (Bovine).